The chain runs to 155 residues: Transcriptional repressor NrdR (155 aa).

The segment at 3-34 (CPFCGNIDTQVKDSRPAEDHVSIRRRRFCPAC) is a zinc-finger region. The ATP-cone domain occupies 49 to 139 (LVVIKSSGKR…VYKNFQAADD (91 aa)).

This sequence belongs to the NrdR family. Requires Zn(2+) as cofactor.

In terms of biological role, negatively regulates transcription of bacterial ribonucleotide reductase nrd genes and operons by binding to NrdR-boxes. The chain is Transcriptional repressor NrdR from Cereibacter sphaeroides (strain ATCC 17029 / ATH 2.4.9) (Rhodobacter sphaeroides).